We begin with the raw amino-acid sequence, 219 residues long: Envelope protein US9 homolog (219 aa).

At 1-193 the chain is on the intravirion side; that stretch reads MEKAEAAAVV…RHRRRRVALT (193 aa). The Di-leucine internalization motif motif lies at 145–146; that stretch reads LL. An acidic region spans residues 153–168; the sequence is DYDSESGCYYSESDNE. 2 positions are modified to phosphoserine; by host CK2: Ser163 and Ser165. Residues 194-214 traverse the membrane as a helical; Signal-anchor for type II membrane protein segment; that stretch reads VAGVILVVVLCAISGIVGAFL. Residues 215-219 lie on the Virion surface side of the membrane; the sequence is ARVFP.

This sequence belongs to the alphaherpesvirinae envelope protein US9 family. Post-translationally, phosphorylated on serines within the acidic cluster. Phosphorylation determines whether endocytosed viral US9 traffics to the trans-Golgi network or recycles to the cell membrane.

It is found in the virion membrane. The protein localises to the host Golgi apparatus membrane. It localises to the host smooth endoplasmic reticulum membrane. Its subcellular location is the host cell membrane. Functionally, essential for the anterograde spread of the infection throughout the host nervous system. Together with the gE/gI heterodimer, US9 is involved in the sorting and transport of viral structural components toward axon tips. The sequence is that of Envelope protein US9 homolog from Equine herpesvirus 1 (strain Ab4p) (EHV-1).